Reading from the N-terminus, the 154-residue chain is Probable biofilm-surface layer protein B (154 aa).

Positions 1-30 are cleaved as a signal peptide; it reads MLKRTSFVSSLFISSAVLLSILLPSGQAHA.

This sequence belongs to the BslA/BslB family. In terms of assembly, monomer in vitro.

It is found in the secreted. Has a minor role in biofilm architecture. May contribute to the surface hydrophobicity. The sequence is that of Probable biofilm-surface layer protein B from Bacillus subtilis (strain 168).